A 729-amino-acid chain; its full sequence is Fatty acid oxidation complex subunit alpha (729 aa).

Residues Met1–Ala189 form an enoyl-CoA hydratase/isomerase region. Asp296 lines the substrate pocket. The interval Glu311 to Ala729 is 3-hydroxyacyl-CoA dehydrogenase. NAD(+) is bound by residues Met324, Asp343, Val400 to Glu402, Lys407, and Ser429. The For 3-hydroxyacyl-CoA dehydrogenase activity role is filled by His450. Asn453 provides a ligand contact to NAD(+). Substrate-binding residues include Asn500 and Tyr660.

This sequence in the N-terminal section; belongs to the enoyl-CoA hydratase/isomerase family. The protein in the C-terminal section; belongs to the 3-hydroxyacyl-CoA dehydrogenase family. As to quaternary structure, heterotetramer of two alpha chains (FadB) and two beta chains (FadA).

It catalyses the reaction a (3S)-3-hydroxyacyl-CoA + NAD(+) = a 3-oxoacyl-CoA + NADH + H(+). The enzyme catalyses a (3S)-3-hydroxyacyl-CoA = a (2E)-enoyl-CoA + H2O. It carries out the reaction a 4-saturated-(3S)-3-hydroxyacyl-CoA = a (3E)-enoyl-CoA + H2O. The catalysed reaction is (3S)-3-hydroxybutanoyl-CoA = (3R)-3-hydroxybutanoyl-CoA. It catalyses the reaction a (3Z)-enoyl-CoA = a 4-saturated (2E)-enoyl-CoA. The enzyme catalyses a (3E)-enoyl-CoA = a 4-saturated (2E)-enoyl-CoA. The protein operates within lipid metabolism; fatty acid beta-oxidation. Its function is as follows. Involved in the aerobic and anaerobic degradation of long-chain fatty acids via beta-oxidation cycle. Catalyzes the formation of 3-oxoacyl-CoA from enoyl-CoA via L-3-hydroxyacyl-CoA. It can also use D-3-hydroxyacyl-CoA and cis-3-enoyl-CoA as substrate. The sequence is that of Fatty acid oxidation complex subunit alpha from Klebsiella pneumoniae (strain 342).